The primary structure comprises 344 residues: MILKPENEKKLIIDVLKKFGVPEEDAKITADVFVDADLKGFTSHGIGRFPQYITALKLGNINPKPDIKIVKESPATAVIDGDLGLGQVVGKKAMELAIKKAKNVGVGVVATRNANHFGIAGYYSELAMNQDMIGITITNTEPAMAPFGGKEKILGTNPIAIAFKGNKYKFSLDMATASIARGKILEALRKKIKIPEGCAVDKDGKPTTDPAKALEGCILPFGGPKGYGLALAIEMLSAIGGAEVGTKVKGTANPEERCTKGDLFIAINPEFFMGKEEFKRKVDELLDEIKNSEPAEGFEILIPGEIEERNKMKRKDGFEIDKNLYNQLKEICNELGLNIEDYIE.

The protein belongs to the LDH2/MDH2 oxidoreductase family.

It is found in the cytoplasm. The enzyme catalyses a (2S)-2-hydroxycarboxylate + NAD(+) = a 2-oxocarboxylate + NADH + H(+). Its pathway is cofactor biosynthesis; coenzyme M biosynthesis; sulfoacetaldehyde from phosphoenolpyruvate and sulfite: step 3/4. It participates in cofactor biosynthesis; 5,6,7,8-tetrahydromethanopterin biosynthesis. Its function is as follows. Catalyzes the reduction of sulfopyruvate to (R)-sulfolactate much more efficiently than the reverse reaction. Also catalyzes the reduction of oxaloacetate, alpha-ketoglutarate, and to a much lower extent, KHTCA, but not pyruvate. Involved in the biosynthesis of both coenzyme M (with (R)-sulfolactate) and methanopterin (with alpha-ketoglutarate). This is L-sulfolactate dehydrogenase (comC) from Methanocaldococcus jannaschii (strain ATCC 43067 / DSM 2661 / JAL-1 / JCM 10045 / NBRC 100440) (Methanococcus jannaschii).